We begin with the raw amino-acid sequence, 465 residues long: MTIHIYNTLTRQKEEFVPLEENKVKMYVCGPTVYNYIHIGNARPPMVFDTVRRYLEYKGYDVQYVSNFTDVDDKLIKAANELGEDVPTIADRFVEAYFEDVTALGCKHATVHPRVTENMDIIIEFIQELVNKGYAYESEGDVYFKTKEFEGYGKLSHQPIADLRHGARIEVGEKKQDPLDFALWKAAKEGEIFWESPWGQGRPGWHIECSAMARKYLGDTIDIHAGGQDLAFPHHENEIAQSEALTGKTFARYWMHNGYININNEKMSKSLGNFILVHDIIKQYDPQLIRFFMLSVHYRHPINFSEELLQSTNNGLERIKTAYGNLKHRMESSTDLTDHNEKWLVEIEKFQTAFEEAMNDDFNTANAITELYNVANYANQYLLEEHTSKVVIEAYVKQLETLFDILGLELTQEELLDEEIEELIQKRIEARKNRDFALSDQIRDDLKGRNIILEDTAQGTRWKRG.

Cys-29 contacts Zn(2+). A 'HIGH' region motif is present at residues 31–41; that stretch reads PTVYNYIHIGN. Positions 209, 234, and 238 each coordinate Zn(2+). The 'KMSKS' region signature appears at 266-270; sequence KMSKS. Residue Lys-269 participates in ATP binding. Ser-270 is subject to Phosphoserine.

The protein belongs to the class-I aminoacyl-tRNA synthetase family. As to quaternary structure, monomer. Requires Zn(2+) as cofactor.

The protein resides in the cytoplasm. The enzyme catalyses tRNA(Cys) + L-cysteine + ATP = L-cysteinyl-tRNA(Cys) + AMP + diphosphate. This chain is Cysteine--tRNA ligase, found in Bacillus cereus (strain G9842).